A 609-amino-acid chain; its full sequence is Sodium- and chloride-dependent GABA transporter 2 (609 aa).

Residues 1 to 13 are compositionally biased toward polar residues; sequence MDSRASGTASNGE. Residues 1–23 are disordered; it reads MDSRASGTASNGETKPVYPVMEK. The Cytoplasmic segment spans residues 1–40; the sequence is MDSRASGTASNGETKPVYPVMEKEEEEGTLERGHWNNKME. The next 3 membrane-spanning stretches (helical) occupy residues 41 to 61, 68 to 88, and 121 to 141; these read FVLS…FPYL, GAFF…VFLL, and IVIL…FYLF. The Extracellular portion of the chain corresponds to 142–206; it reads SSFTIDLPWG…GIQHLGALRW (65 aa). Cysteines 153 and 162 form a disulfide. Asparagine 169 and asparagine 173 each carry an N-linked (GlcNAc...) asparagine glycan. The next 2 membrane-spanning stretches (helical) occupy residues 207-227 and 233-253; these read ELAL…WKGV and VVYF…IRGV. Asparagine 269 carries an N-linked (GlcNAc...) asparagine glycan. Transmembrane regions (helical) follow at residues 282–302, 319–339, 366–386, 418–438, 453–473, 490–510, and 528–548; these read AGTQ…ALGS, FLNS…LGFM, VVML…VVLL, VLIL…LTEG, GMCL…VYGA, PLIK…TFLF, and WWGD…IPAW. At 549-609 the chain is on the cytoplasmic side; the sequence is SLYRLGTLKG…LRLTELESHC (61 aa). Phosphothreonine is present on threonine 594. Serine 598 is modified (phosphoserine).

Belongs to the sodium:neurotransmitter symporter (SNF) (TC 2.A.22) family. SLC6A13 subfamily.

The protein localises to the cell membrane. The protein resides in the basolateral cell membrane. It catalyses the reaction 4-aminobutanoate(out) + chloride(out) + 2 Na(+)(out) = 4-aminobutanoate(in) + chloride(in) + 2 Na(+)(in). The enzyme catalyses taurine(out) + chloride(out) + 2 Na(+)(out) = taurine(in) + chloride(in) + 2 Na(+)(in). The catalysed reaction is beta-alanine(out) + chloride(out) + 2 Na(+)(out) = beta-alanine(in) + chloride(in) + 2 Na(+)(in). It carries out the reaction hypotaurine(out) + chloride(out) + 2 Na(+)(out) = hypotaurine(in) + chloride(in) + 2 Na(+)(in). Functionally, mediates sodium- and chloride-dependent transport of gamma-aminobutyric acid (GABA). Can also mediate transport of beta-alanine, taurine and hypotaurine. This Macaca fascicularis (Crab-eating macaque) protein is Sodium- and chloride-dependent GABA transporter 2 (SLC6A13).